Here is a 292-residue protein sequence, read N- to C-terminus: Tumor necrosis factor alpha-induced protein 8-like protein 3 (292 aa).

Residues 81 to 107 form a disordered region; the sequence is DAQPAARSMDSDSGEQSEGEPVTAAGP. The binding to phosphoinositides stretch occupies residues 109–292; it reads VFSSKSLALQ…INKLLDEKVL (184 aa).

It belongs to the TNFAIP8 family. In terms of tissue distribution, widely expressed (at protein level). Highly expressed in most carcinoma cell lines.

Its subcellular location is the cytoplasm. It is found in the cell membrane. Acts as a lipid transfer protein. Preferentially captures and shuttles two lipid second messengers, i.e., phosphatidylinositol 4,5- bisphosphate and phosphatidylinositol 3,4,5-trisphosphate and increases their levels in the plasma membrane. Additionally, may also function as a lipid-presenting protein to enhance the activity of the PI3K-AKT and MEK-ERK pathways. May act as a regulator of tumorigenesis through its activation of phospholipid signaling. The sequence is that of Tumor necrosis factor alpha-induced protein 8-like protein 3 (TNFAIP8L3) from Homo sapiens (Human).